The chain runs to 247 residues: Anionic trypsin (247 aa).

Residues 1–15 (MNPLLILAFLGAAVA) form the signal peptide. The propeptide at 16–23 (TPTDDDDK) is activation peptide. In terms of domain architecture, Peptidase S1 spans 24–244 (IVGGYTCEEN…FVDWIQSTIA (221 aa)). Disulfide bonds link cysteine 30-cysteine 160, cysteine 48-cysteine 64, cysteine 132-cysteine 233, cysteine 139-cysteine 206, cysteine 171-cysteine 185, and cysteine 196-cysteine 220. Histidine 63 (charge relay system) is an active-site residue. The Ca(2+) site is built by glutamate 75, asparagine 77, valine 80, and glutamate 85. Aspartate 107 serves as the catalytic Charge relay system. Serine 200 (charge relay system) is an active-site residue.

It belongs to the peptidase S1 family. It depends on Ca(2+) as a cofactor.

The protein localises to the secreted. Its subcellular location is the extracellular space. The enzyme catalyses Preferential cleavage: Arg-|-Xaa, Lys-|-Xaa.. The chain is Anionic trypsin from Canis lupus familiaris (Dog).